Reading from the N-terminus, the 151-residue chain is 3-hydroxyacyl-thioester dehydratase Z (151 aa).

Residues 11 to 131 enclose the MaoC-like domain; it reads AAAAGEKVGQ…TVQATVSTTV (121 aa). Substrate-binding positions include 60-63, 86-89, 97-99, Q124, and R148; these read IAHG, AINY, and PAP.

It belongs to the enoyl-CoA hydratase/isomerase family. As to quaternary structure, homodimer.

The catalysed reaction is a (3R)-3-hydroxyacyl-CoA = a (2E)-enoyl-CoA + H2O. Its function is as follows. Shows trans-enoyl-CoA hydratase/3-hydroxyacyl-CoA dehydratase activity. In Mycobacterium bovis (strain ATCC BAA-935 / AF2122/97), this protein is 3-hydroxyacyl-thioester dehydratase Z.